The chain runs to 213 residues: Protein nullo (213 aa).

As to expression, blastoderm. Throughout the entire cortex of the embryo although the distribution is not uniform.

In terms of biological role, actin-myosin network stability during cellularization. Might be involved in increasing actin-actin interactions or membrane-to-cytoskeleton attachments. nullo together with Sry-a and bnk may provide auxiliary functions, by acting both to stabilize a large and dynamic microfilament structure and regulate its functions. This Drosophila melanogaster (Fruit fly) protein is Protein nullo (nullo).